Consider the following 202-residue polypeptide: Small ribosomal subunit protein uS5 (202 aa).

An S5 DRBM domain is found at L50–V113.

Belongs to the universal ribosomal protein uS5 family. Part of the 30S ribosomal subunit. Contacts protein S4.

Functionally, with S4 and S12 plays an important role in translational accuracy. The polypeptide is Small ribosomal subunit protein uS5 (Pyrobaculum islandicum (strain DSM 4184 / JCM 9189 / GEO3)).